The chain runs to 257 residues: Imidazole glycerol phosphate synthase subunit HisF (257 aa).

Residues aspartate 11 and aspartate 130 contribute to the active site.

Belongs to the HisA/HisF family. Heterodimer of HisH and HisF.

Its subcellular location is the cytoplasm. It catalyses the reaction 5-[(5-phospho-1-deoxy-D-ribulos-1-ylimino)methylamino]-1-(5-phospho-beta-D-ribosyl)imidazole-4-carboxamide + L-glutamine = D-erythro-1-(imidazol-4-yl)glycerol 3-phosphate + 5-amino-1-(5-phospho-beta-D-ribosyl)imidazole-4-carboxamide + L-glutamate + H(+). The protein operates within amino-acid biosynthesis; L-histidine biosynthesis; L-histidine from 5-phospho-alpha-D-ribose 1-diphosphate: step 5/9. IGPS catalyzes the conversion of PRFAR and glutamine to IGP, AICAR and glutamate. The HisF subunit catalyzes the cyclization activity that produces IGP and AICAR from PRFAR using the ammonia provided by the HisH subunit. This chain is Imidazole glycerol phosphate synthase subunit HisF, found in Shewanella frigidimarina (strain NCIMB 400).